A 168-amino-acid polypeptide reads, in one-letter code: RNA pyrophosphohydrolase (168 aa).

A Nudix hydrolase domain is found at 8–159 (PYRTCVGVML…KRPVYERVVK (152 aa)). The Nudix box motif lies at 47 to 68 (GGVDPGEDTWKAAKRELYEETS).

Belongs to the Nudix hydrolase family. RppH subfamily. It depends on a divalent metal cation as a cofactor.

In terms of biological role, accelerates the degradation of transcripts by removing pyrophosphate from the 5'-end of triphosphorylated RNA, leading to a more labile monophosphorylated state that can stimulate subsequent ribonuclease cleavage. The sequence is that of RNA pyrophosphohydrolase from Rhodopseudomonas palustris (strain ATCC BAA-98 / CGA009).